Here is a 404-residue protein sequence, read N- to C-terminus: Transcription factor sem-2 (404 aa).

The HMG box DNA-binding region spans 93–161 (IKRPMNAFMV…CHMQEYPDYK (69 aa)). Disordered regions lie at residues 158–218 (PDYK…QFQN) and 321–359 (HTSP…NSAG). Residues 177 to 199 (QQPAQPQAPQQQQAPPRGASPQA) show a composition bias toward low complexity. Composition is skewed to polar residues over residues 207–218 (TDQQSETQQFQN) and 347–359 (ASEQ…NSAG).

It is found in the nucleus. In terms of biological role, probable transcription factor required for embryogenesis, vulval development and cell fate specification of the postembryonic mesoderm (also known as the M lineage). Specifically, required for the specification of sex myoblast cells and their development into the muscles that are necessary for egg-laying. In addition, may be involved in RME GABAergic motor neuron progenitor cell fate specification. The protein is Transcription factor sem-2 of Caenorhabditis elegans.